The sequence spans 467 residues: E3 ubiquitin-protein ligase TRIM11 (467 aa).

The RING-type zinc finger occupies 16–57 (CAICLDYFTDPVMTDCGHNFCRECIRRCWGQPEGPYACPECR). S85 is subject to Phosphoserine. The B box-type zinc finger occupies 87 to 127 (VPQGVCAAHREPLTTFCGDDLSLLCPTCERSEHWAHRVRPL). The Zn(2+) site is built by C92, H95, C114, and H119. The stretch at 127–207 (LQEAADDLKG…KLEEEELEVL (81 aa)) forms a coiled coil. One can recognise a B30.2/SPRY domain in the interval 267-460 (ELRTVCRVPG…MTICRLIGVS (194 aa)). A compositionally biased stretch (basic and acidic residues) spans 304–313 (DRRSVQRGEQ). Positions 304 to 325 (DRRSVQRGEQRQALPDSPERFD) are disordered.

Belongs to the TRIM/RBCC family. Binds cytoplasmic tail of integrin alpha-1. Interacts with the HN peptide. Interacts with PHOX2B. Interacts (when autoubiquitinated) with SQSTM1/p62; promoting AIM2 recruitment to autophagosomes. Interacts with AIM2; promoting its autophagy-dependent degradation. In terms of processing, autoubiquitinated upon DNA stimulation; autoubiquitination promotes interaction with SQSTM1/p62 and recruitment of AIM2 to autophagosomes.

Its subcellular location is the cytoplasm. The protein localises to the nucleus. The enzyme catalyses S-ubiquitinyl-[E2 ubiquitin-conjugating enzyme]-L-cysteine + [acceptor protein]-L-lysine = [E2 ubiquitin-conjugating enzyme]-L-cysteine + N(6)-ubiquitinyl-[acceptor protein]-L-lysine.. The protein operates within protein modification; protein ubiquitination. Its function is as follows. E3 ubiquitin-protein ligase that promotes the degradation of insoluble ubiquitinated proteins, including insoluble PAX6, poly-Gln repeat expanded HTT and poly-Ala repeat expanded ARX. Mediates PAX6 ubiquitination leading to proteasomal degradation, thereby modulating cortical neurogenesis. May also inhibit PAX6 transcriptional activity, possibly in part by preventing the binding of PAX6 to its consensus sequences. May contribute to the regulation of the intracellular level of HN (humanin) or HN-containing proteins through the proteasomal degradation pathway. Mediates MED15 ubiquitination leading to proteasomal degradation. May contribute to the innate restriction of retroviruses. Upon overexpression, reduces HIV-1 and murine leukemia virus infectivity, by suppressing viral gene expression. Antiviral activity depends on a functional E3 ubiquitin-protein ligase domain. May regulate TRIM5 turnover via the proteasome pathway, thus counteracting the TRIM5-mediated cross-species restriction of retroviral infection at early stages of the retroviral life cycle. Acts as an inhibitor of the AIM2 inflammasome by promoting autophagy-dependent degradation of AIM2. Mechanistically, undergoes autoubiquitination upon DNA stimulation, promoting interaction with AIM2 and SQSTM1/p62, leading to AIM2 recruitment to autophagosomes. The chain is E3 ubiquitin-protein ligase TRIM11 (Trim11) from Rattus norvegicus (Rat).